Reading from the N-terminus, the 430-residue chain is MATLSVKPSPRFRLPDWQTNSYLLSTNAERQRDASHQIRQEARVLRNETNNQTIWDEHDNRTRLAERIDTVSRWKEMLDKCLTDLDAEIDALAQMKESAEQNLQAKNLPLDVAIECLTLRESRRDIDVVKDPVEEELHKEVEVIEATKKALQQKISQAFEKLFLLQEARQRLNSDHRGKMETLDIDRGCLSLNLTSPNISLKINPTRVPNGSTSLQQWDDLSRFNKDHGEAEMKKAIELREAIALTIAETNNELEAQRVATEFAFRKRLREMEKLYSELKWQEKNTLEEIAELHEDIRHLEEDLRRKLQNLKLCHTRLEARTYRPNVELCRDQAQYGLTDEVHQLEATIAALKQKLAQAQDALDALYKHLARLQADIACKANSMLLDTKCMDTRRKLTVPAEKFVPEVDTFTRTTNRTLSPLKTCQLELA.

Coiled-coil stretches lie at residues 81–162 (CLTD…FEKL) and 265–379 (FRKR…DIAC).

This sequence belongs to the tektin family. Microtubule inner protein component of sperm flagellar doublet microtubules. May interact with CCDC172. Post-translationally, tyrosine phosphorylated. Ubiquitinated, leading to its degradation. Deubiquitinated by USP16, promoting its stability. In terms of tissue distribution, expressed in trachea multiciliated cells.

It localises to the cytoplasm. The protein resides in the cytoskeleton. It is found in the cilium axoneme. The protein localises to the flagellum axoneme. Its subcellular location is the microtubule organizing center. Its function is as follows. Microtubule inner protein (MIP) part of the dynein-decorated doublet microtubules (DMTs) in cilia and flagellar axoneme. Plays a key role in the assembly or attachment of the inner dynein arm to microtubules in sperm flagella and tracheal cilia. Forms filamentous polymers in the walls of ciliary and flagellar microtubules. This chain is Tektin-2 (TEKT2), found in Bos taurus (Bovine).